A 275-amino-acid chain; its full sequence is Nitrogenase iron protein 3 (275 aa).

Glycine 9–serine 16 provides a ligand contact to ATP. Cysteine 97 is a binding site for [4Fe-4S] cluster. Arginine 100 is subject to ADP-ribosylarginine; by dinitrogenase reductase ADP-ribosyltransferase. Cysteine 132 is a [4Fe-4S] cluster binding site.

It belongs to the NifH/BchL/ChlL family. Homodimer. The cofactor is [4Fe-4S] cluster. In terms of processing, the reversible ADP-ribosylation of Arg-100 inactivates the nitrogenase reductase and regulates nitrogenase activity.

It carries out the reaction N2 + 8 reduced [2Fe-2S]-[ferredoxin] + 16 ATP + 16 H2O = H2 + 8 oxidized [2Fe-2S]-[ferredoxin] + 2 NH4(+) + 16 ADP + 16 phosphate + 6 H(+). Its function is as follows. The key enzymatic reactions in nitrogen fixation are catalyzed by the nitrogenase complex, which has 2 components: the iron protein (component 2) and a component 1 which is either a molybdenum-iron protein, a vanadium-iron, or an iron-iron protein. In Azotobacter vinelandii, this protein is Nitrogenase iron protein 3 (anfH).